Reading from the N-terminus, the 80-residue chain is DNA-binding protein HU-like (80 aa).

The protein belongs to the bacterial histone-like protein family.

In terms of biological role, histone-like DNA-binding protein which is capable of wrapping DNA to stabilize it, and thus to prevent its denaturation under extreme environmental conditions. This is DNA-binding protein HU-like from Rickettsia rickettsii (strain Sheila Smith).